A 564-amino-acid polypeptide reads, in one-letter code: Potassium-transporting ATPase potassium-binding subunit (564 aa).

A run of 10 helical transmembrane segments spans residues 4–24 (HEIL…PFLG), 67–87 (TLAL…ILML), 135–155 (VGLT…LVAL), 179–199 (LYVL…QGVP), 258–278 (FEVA…GHYV), 286–306 (AILG…LWAE), 376–396 (IFGG…IAVF), 420–440 (LLVF…AIAA), 487–507 (LMIG…ILAI), and 528–548 (GPLF…LTFL).

The protein belongs to the KdpA family. The system is composed of three essential subunits: KdpA, KdpB and KdpC.

The protein resides in the cell inner membrane. Its function is as follows. Part of the high-affinity ATP-driven potassium transport (or Kdp) system, which catalyzes the hydrolysis of ATP coupled with the electrogenic transport of potassium into the cytoplasm. This subunit binds the periplasmic potassium ions and delivers the ions to the membrane domain of KdpB through an intramembrane tunnel. The polypeptide is Potassium-transporting ATPase potassium-binding subunit (Pseudomonas aeruginosa (strain ATCC 15692 / DSM 22644 / CIP 104116 / JCM 14847 / LMG 12228 / 1C / PRS 101 / PAO1)).